Reading from the N-terminus, the 91-residue chain is Elongation factor 1-beta (91 aa).

Belongs to the EF-1-beta/EF-1-delta family.

In terms of biological role, promotes the exchange of GDP for GTP in EF-1-alpha/GDP, thus allowing the regeneration of EF-1-alpha/GTP that could then be used to form the ternary complex EF-1-alpha/GTP/AAtRNA. This is Elongation factor 1-beta from Saccharolobus islandicus (strain Y.N.15.51 / Yellowstone #2) (Sulfolobus islandicus).